We begin with the raw amino-acid sequence, 207 residues long: MATIDVFDISKNKVGVMDLNDNVFNGEVKEYLIHEAIKVQLANRRAGTVSVKNRAIVSGGGKKPYRQKGTGQARQGCIRAPHFVGGGVAFGPRPKVYNLSMNKKARKAAVRSALSMLYKENKLSVLDSFTLPSISTKGFVTVLKAFDLAKTLVVVDEPNLNLELSARNVKDVKVLKAEHLNVFDIVKYNNIIVTQSAVRTIEGVLQS.

It belongs to the universal ribosomal protein uL4 family. In terms of assembly, part of the 50S ribosomal subunit.

In terms of biological role, one of the primary rRNA binding proteins, this protein initially binds near the 5'-end of the 23S rRNA. It is important during the early stages of 50S assembly. It makes multiple contacts with different domains of the 23S rRNA in the assembled 50S subunit and ribosome. Forms part of the polypeptide exit tunnel. The protein is Large ribosomal subunit protein uL4 of Geobacter sulfurreducens (strain ATCC 51573 / DSM 12127 / PCA).